A 544-amino-acid chain; its full sequence is MAKEIKFSEEARRAMLRGVDALADAVKVTLGPKGRNVVLEKKFGSPLITNDGVTIAKEIELEDAFENMGAKLVAEVASKTNDVAGDGTTTATVLAQAMIREGLKNVTAGANPVGVRKGMEQAVAVAIENLKEISKPIEGKESIAQVAAISAADEEVGSLIAEAMERVGNDGVITIEESKGFTTELEVVEGMQFDRGYASPYMVTDSDKMEAVLDNPYILITDKKITNIQEILPVLEQVVQQGKPLLLIAEDVEGEALATLVVNKLRGTFNAVAVKAPGFGDRRKAMLEDIAVLTGGEVITEDLGLDLKSTQIAQLGRASKVVVTKENTTIVEGAGETDKISARVTQIRAQVEETTSEFDREKLQERLAKLAGGVAVIKVGAATETELKERKLRIEDALNSTRAAVEEGIVSGGGTALVNVYNKVAAVEAEGDAQTGINIVLRALEEPIRQIAHNAGLEGSVIVERLKNEEIGVGFNAATGEWVNMIEKGIVDPTKVTRSALQNAASVAAMFLTTEAVVADKPEENGGGAGMPDMGGMGGMGGMM.

ATP is bound by residues 29-32 (TLGP), 86-90 (DGTTT), glycine 413, 476-478 (NAA), and aspartate 492.

This sequence belongs to the chaperonin (HSP60) family. As to quaternary structure, forms a cylinder of 14 subunits composed of two heptameric rings stacked back-to-back. Interacts with the co-chaperonin GroES.

The protein resides in the cytoplasm. Its subcellular location is the secreted. The catalysed reaction is ATP + H2O + a folded polypeptide = ADP + phosphate + an unfolded polypeptide.. In terms of biological role, together with its co-chaperonin GroES, plays an essential role in assisting protein folding. The GroEL-GroES system forms a nano-cage that allows encapsulation of the non-native substrate proteins and provides a physical environment optimized to promote and accelerate protein folding. The chain is Chaperonin GroEL from Bacillus subtilis (strain 168).